A 204-amino-acid polypeptide reads, in one-letter code: E3 ubiquitin-protein ligase MPSR1 (204 aa).

The RING-type; atypical zinc-finger motif lies at 113-154 (CVICLEEWKSEETVKEMPCKHRFHGGCIEKWLGFHGSCPVCR).

In terms of processing, autoubiquitinated.

The protein localises to the cytoplasm. The catalysed reaction is S-ubiquitinyl-[E2 ubiquitin-conjugating enzyme]-L-cysteine + [acceptor protein]-L-lysine = [E2 ubiquitin-conjugating enzyme]-L-cysteine + N(6)-ubiquitinyl-[acceptor protein]-L-lysine.. Its function is as follows. E3 ubiquitin-protein ligase involved in protein quality control (PQC) under proteotoxic stress. Is essential to plant survival under proteotoxic stress. Functions by removing damaged proteins before they form cytotoxic aggregates. Recognizes misfolded proteins selectively and tethers polyubiquitin chains to the proteins directly for subsequent degradation by the 26S proteasome pathway. Targets misfolded proteins independently of cytoplasmic chaperones. Associates with the 26S proteasome and sustains the structural integrity of the proteasome complex at the initial stage of proteotoxic stress. Under normal conditions, MPSR1 becomes highly unstable by its autoubiquitination activity and is stabilized during proteotoxic stress by conjugating ubiquitins on misfolded proteins. This Arabidopsis thaliana (Mouse-ear cress) protein is E3 ubiquitin-protein ligase MPSR1.